The primary structure comprises 266 residues: 2-Cys peroxiredoxin BAS1, chloroplastic (266 aa).

Residues 1–16 (MASVASSTTLISSPSS) are compositionally biased toward low complexity. Positions 1 to 25 (MASVASSTTLISSPSSRVFPAKSSL) are disordered. The transit peptide at 1-65 (MASVASSTTL…SSTSRRSFAV (65 aa)) directs the protein to the chloroplast. Residues 73–232 (PLVGNKAPDF…TMRTLQALQY (160 aa)) enclose the Thioredoxin domain. Cys-119 acts as the Cysteine sulfenic acid (-SOH) intermediate in catalysis.

It belongs to the peroxiredoxin family. AhpC/Prx1 subfamily. Homodimer; disulfide-linked, upon oxidation. Interacts with the plastidial thioredoxin CDSP32. Interacts with the plastidial NADPH-dependent thioredoxin reductase ANTR-C.

It is found in the plastid. The protein resides in the chloroplast. It carries out the reaction a hydroperoxide + [thioredoxin]-dithiol = an alcohol + [thioredoxin]-disulfide + H2O. Functionally, thiol-specific peroxidase that catalyzes the reduction of hydrogen peroxide and organic hydroperoxides to water and alcohols, respectively. Plays a role in cell protection against oxidative stress by detoxifying peroxides. May be an antioxidant enzyme particularly in the developing shoot and photosynthesizing leaf. The chain is 2-Cys peroxiredoxin BAS1, chloroplastic (BAS1) from Arabidopsis thaliana (Mouse-ear cress).